The following is a 328-amino-acid chain: tRNA(Ile)-lysidine synthase (328 aa).

Ser35 to Ser40 is an ATP binding site.

It belongs to the tRNA(Ile)-lysidine synthase family.

The protein localises to the cytoplasm. It catalyses the reaction cytidine(34) in tRNA(Ile2) + L-lysine + ATP = lysidine(34) in tRNA(Ile2) + AMP + diphosphate + H(+). Ligates lysine onto the cytidine present at position 34 of the AUA codon-specific tRNA(Ile) that contains the anticodon CAU, in an ATP-dependent manner. Cytidine is converted to lysidine, thus changing the amino acid specificity of the tRNA from methionine to isoleucine. This Polaromonas naphthalenivorans (strain CJ2) protein is tRNA(Ile)-lysidine synthase.